Consider the following 534-residue polypeptide: Potential RNA-dependent RNA polymerase (534 aa).

Residues 255 to 373 (DVVVCTDFSK…TYPGISAEDV (119 aa)) enclose the RdRp catalytic domain.

The protein localises to the virion. The enzyme catalyses RNA(n) + a ribonucleoside 5'-triphosphate = RNA(n+1) + diphosphate. RNA-directed RNA polymerase that is involved in both transcription and genome replication. The protein is Potential RNA-dependent RNA polymerase (Segment-2) of Human picobirnavirus (strain Human/Thailand/Hy005102/-) (PBV).